The sequence spans 484 residues: Serine protease HTR4 (484 aa).

An N-terminal signal peptide occupies residues methionine 1–glycine 28. In terms of domain architecture, IGFBP N-terminal spans proline 36–proline 114. Intrachain disulfides connect cysteine 40/cysteine 66, cysteine 44/cysteine 68, cysteine 49/cysteine 69, cysteine 55/cysteine 72, cysteine 80/cysteine 94, cysteine 88/cysteine 111, cysteine 113/cysteine 132, and cysteine 121/cysteine 157. The 55-residue stretch at glycine 105–aspartate 159 folds into the Kazal-like domain. Residues alanine 209–leucine 369 form a serine protease region. Residues histidine 225, aspartate 255, and serine 333 each act as charge relay system in the active site. In terms of domain architecture, PDZ spans leucine 390–glutamine 472.

It belongs to the peptidase S1C family.

The protein localises to the secreted. In terms of biological role, serine protease. The protein is Serine protease HTR4 (HTRA4) of Bos taurus (Bovine).